The chain runs to 92 residues: Small ribosomal subunit protein uS19c (92 aa).

It belongs to the universal ribosomal protein uS19 family.

Its subcellular location is the plastid. It localises to the chloroplast. Functionally, protein S19 forms a complex with S13 that binds strongly to the 16S ribosomal RNA. This Staurastrum punctulatum (Green alga) protein is Small ribosomal subunit protein uS19c.